Consider the following 609-residue polypeptide: All-trans-retinol 13,14-reductase (609 aa).

Positions 1-21 are cleaved as a signal peptide; sequence MWITALLLVVLLLVVVHRVYV.

Belongs to the carotenoid/retinoid oxidoreductase family. CrtISO subfamily. Requires NAD(+) as cofactor. It depends on NADP(+) as a cofactor. FAD serves as cofactor. Highly expressed in liver, kidney and heart.

It is found in the endoplasmic reticulum membrane. The enzyme catalyses all-trans-13,14-dihydroretinol + A = all-trans-retinol + AH2. In terms of biological role, catalyzes the saturation of all-trans-retinol to all-trans-13,14-dihydroretinol. Does not exhibit any activity toward all-trans-retinoic acid, nor 9-cis, 11-cis or 13-cis-retinol isomers. May play a role in the metabolism of vitamin A. Independently of retinol conversion, may regulate liver metabolism upstream of MLXIPL/ChREBP. May play a role in adipocyte differentiation. The protein is All-trans-retinol 13,14-reductase (Retsat) of Rattus norvegicus (Rat).